The chain runs to 161 residues: Ribonuclease P protein component (161 aa).

Belongs to the RnpA family. As to quaternary structure, consists of a catalytic RNA component (M1 or rnpB) and a protein subunit.

The catalysed reaction is Endonucleolytic cleavage of RNA, removing 5'-extranucleotides from tRNA precursor.. Its function is as follows. RNaseP catalyzes the removal of the 5'-leader sequence from pre-tRNA to produce the mature 5'-terminus. It can also cleave other RNA substrates such as 4.5S RNA. The protein component plays an auxiliary but essential role in vivo by binding to the 5'-leader sequence and broadening the substrate specificity of the ribozyme. The protein is Ribonuclease P protein component of Helicobacter pylori (strain Shi470).